The following is a 77-amino-acid chain: uncharacterized protein (77 aa).

Disordered stretches follow at residues 1–34 and 56–77; these read MSRA…TKMN and LDGD…FSGR. Over residues 8-20 the composition is skewed to basic and acidic residues; the sequence is DNDKGWAKKKGAD. Positions 25–34 are enriched in basic residues; that stretch reads PRPHKQTKMN. Residues 56–70 show a composition bias toward basic and acidic residues; that stretch reads LDGDIRRGGNKKSER.

This is an uncharacterized protein from Dictyostelium discoideum (Social amoeba).